The following is a 126-amino-acid chain: MSNMIVLIIFAAFIIYMIASYVYQQRIMKTLTEEEFRAGYRKAQLIDVREPNEFEGGHILGARNIPLSQLKQRKNEIRTDKPVYLYCQNSVRSGRAAQTLRKNGCTEIYNLKGGFKKWGGKIKAKK.

A helical transmembrane segment spans residues 3 to 23 (NMIVLIIFAAFIIYMIASYVY). A Rhodanese domain is found at 39 to 123 (GYRKAQLIDV…GFKKWGGKIK (85 aa)).

It is found in the cell membrane. This is an uncharacterized protein from Bacillus subtilis (strain 168).